The primary structure comprises 115 residues: Nucleoid-associated protein Rpic_1036 (115 aa).

It belongs to the YbaB/EbfC family. In terms of assembly, homodimer.

It localises to the cytoplasm. It is found in the nucleoid. In terms of biological role, binds to DNA and alters its conformation. May be involved in regulation of gene expression, nucleoid organization and DNA protection. The protein is Nucleoid-associated protein Rpic_1036 of Ralstonia pickettii (strain 12J).